Consider the following 489-residue polypeptide: Glutamyl-tRNA(Gln) amidotransferase subunit A (489 aa).

Catalysis depends on charge relay system residues lysine 80 and serine 160. Serine 184 acts as the Acyl-ester intermediate in catalysis.

Belongs to the amidase family. GatA subfamily. Heterotrimer of A, B and C subunits.

The enzyme catalyses L-glutamyl-tRNA(Gln) + L-glutamine + ATP + H2O = L-glutaminyl-tRNA(Gln) + L-glutamate + ADP + phosphate + H(+). Allows the formation of correctly charged Gln-tRNA(Gln) through the transamidation of misacylated Glu-tRNA(Gln) in organisms which lack glutaminyl-tRNA synthetase. The reaction takes place in the presence of glutamine and ATP through an activated gamma-phospho-Glu-tRNA(Gln). The chain is Glutamyl-tRNA(Gln) amidotransferase subunit A from Wolbachia sp. subsp. Drosophila simulans (strain wRi).